The sequence spans 290 residues: Ribosomal RNA small subunit methyltransferase A (290 aa).

Residues Asn-27, Leu-29, Gly-54, Glu-75, Asp-100, and Asn-125 each contribute to the S-adenosyl-L-methionine site.

Belongs to the class I-like SAM-binding methyltransferase superfamily. rRNA adenine N(6)-methyltransferase family. RsmA subfamily.

It localises to the cytoplasm. The enzyme catalyses adenosine(1518)/adenosine(1519) in 16S rRNA + 4 S-adenosyl-L-methionine = N(6)-dimethyladenosine(1518)/N(6)-dimethyladenosine(1519) in 16S rRNA + 4 S-adenosyl-L-homocysteine + 4 H(+). In terms of biological role, specifically dimethylates two adjacent adenosines (A1518 and A1519) in the loop of a conserved hairpin near the 3'-end of 16S rRNA in the 30S particle. May play a critical role in biogenesis of 30S subunits. This chain is Ribosomal RNA small subunit methyltransferase A, found in Streptococcus pneumoniae (strain ATCC BAA-255 / R6).